A 1342-amino-acid polypeptide reads, in one-letter code: Zinc finger protein 335 (1342 aa).

Disordered stretches follow at residues 1 to 102 (MEEN…VTGG) and 201 to 228 (TSTS…AEEP). Residues 34–49 (AVSADSSDAAAAPGQA) are compositionally biased toward low complexity. The span at 201 to 217 (TSTSTCLEAQGGPSSPV) shows a compositional bias: polar residues. The C2H2-type 1 zinc finger occupies 245–268 (FKCKMCQYRSSTKATLLRHMRERH). The tract at residues 274–442 (AAAAAAGKKG…TLPRRRGRPS (169 aa)) is disordered. A compositionally biased stretch (acidic residues) spans 297–327 (EEGPEEEDDDDIVDAGAIDDLEEDSDYNPAE). Positions 346-357 (RPRRRPGRPRKL) are enriched in basic residues. 8 consecutive C2H2-type zinc fingers follow at residues 465-487 (FLCR…VNSH), 495-517 (FKCL…MFNH), 523-545 (YKCD…AAVH), 562-584 (FPCP…MKTH), 590-612 (HMCD…LLTH), 621-643 (FKCE…QLSH), 649-672 (FKCS…AVKH), and 678-701 (FACE…RCRH). Disordered regions lie at residues 732-763 (LKQQ…QSSE) and 964-1013 (CGGL…SAAT). Over residues 740-753 (PGPPPSSPGPPEIP) the composition is skewed to pro residues. A phosphoserine mark is found at Ser-976, Ser-992, and Ser-1007. The span at 986 to 997 (SQSSASSPPATS) shows a compositional bias: low complexity. 4 consecutive C2H2-type zinc fingers follow at residues 1019-1041 (FSCK…KRAH), 1047-1069 (FKCP…MAQH), 1075-1097 (HQCS…MLTH), and 1103-1126 (FACH…QRLH). Lys-1022 is covalently cross-linked (Glycyl lysine isopeptide (Lys-Gly) (interchain with G-Cter in SUMO2)). Residues 1041–1342 (HAGPGAFKCP…EYDVITLADD (302 aa)) are involved in the interaction with CCAR2. The residue at position 1153 (Ser-1153) is a Phosphoserine.

This sequence belongs to the krueppel C2H2-type zinc-finger protein family. In terms of assembly, interacts with NCOA6; may enhance ligand-dependent transcriptional activation by nuclear hormone receptors. Interacts with CNOT6. Interacts with CNOT9; the interaction is direct. Component of a nuclear receptor-mediated transcription complex composed of at least ZNF335, CCAR2 and EMSY; the complex stimulates the transcription of nuclear receptor target genes such as SOX9 and HOXA1. Within the complex interacts with EMSY and interacts (via C-terminus) with CCAR2. Interacts with members of histone H3'Lys4'(H3K4) methyltransferase complexes ASH2L, CXXC1, KMT2A/MLL1, RBBP5, SETD1A and WDR5. Component of a histone methylation complex composed of at least ZNF335, RBBP5, ASH2L and WDR5; the complex may have histone H3-specific methyltransferase activity, however does not have specificity for 'Lys-4' of histone H3. Interacts with RBBP5 and WDR5. Interacts with ASHL2. Components of this complex may associate with components of the ZNF335-CCAR2-EMSY nuclear receptor-mediated transcription complex to form a complex at least composed of ZNF335, HCFC1, CCAR2, EMSY, MKI67, RBBP5, ASH2L and WDR5. Within this complex also interacts with HCFC1 and MKI67. In terms of tissue distribution, ubiquitously expressed.

The protein resides in the nucleus. Component or associated component of some histone methyltransferase complexes may regulate transcription through recruitment of those complexes on gene promoters. Enhances ligand-dependent transcriptional activation by nuclear hormone receptors. Plays an important role in neural progenitor cell proliferation and self-renewal through the regulation of specific genes involved brain development, including REST. Also controls the expression of genes involved in somatic development and regulates, for instance, lymphoblast proliferation. The protein is Zinc finger protein 335 (ZNF335) of Homo sapiens (Human).